The primary structure comprises 118 residues: Large ribosomal subunit protein bL20 (118 aa).

The protein belongs to the bacterial ribosomal protein bL20 family.

Functionally, binds directly to 23S ribosomal RNA and is necessary for the in vitro assembly process of the 50S ribosomal subunit. It is not involved in the protein synthesizing functions of that subunit. The chain is Large ribosomal subunit protein bL20 from Bacillus anthracis (strain CDC 684 / NRRL 3495).